We begin with the raw amino-acid sequence, 425 residues long: Serine--tRNA ligase (425 aa).

230 to 232 contacts L-serine; it reads TAE. An ATP-binding site is contributed by 261–263; sequence RSE. Residue E284 participates in L-serine binding. Residue 348–351 coordinates ATP; it reads EISS. Residue S383 coordinates L-serine.

It belongs to the class-II aminoacyl-tRNA synthetase family. Type-1 seryl-tRNA synthetase subfamily. As to quaternary structure, homodimer. The tRNA molecule binds across the dimer.

The protein resides in the cytoplasm. It carries out the reaction tRNA(Ser) + L-serine + ATP = L-seryl-tRNA(Ser) + AMP + diphosphate + H(+). The enzyme catalyses tRNA(Sec) + L-serine + ATP = L-seryl-tRNA(Sec) + AMP + diphosphate + H(+). It participates in aminoacyl-tRNA biosynthesis; selenocysteinyl-tRNA(Sec) biosynthesis; L-seryl-tRNA(Sec) from L-serine and tRNA(Sec): step 1/1. Catalyzes the attachment of serine to tRNA(Ser). Is also able to aminoacylate tRNA(Sec) with serine, to form the misacylated tRNA L-seryl-tRNA(Sec), which will be further converted into selenocysteinyl-tRNA(Sec). The protein is Serine--tRNA ligase of Ligilactobacillus salivarius (strain UCC118) (Lactobacillus salivarius).